The chain runs to 331 residues: L-lactate dehydrogenase A chain (331 aa).

Residues 29 to 57 and arginine 98 contribute to the NAD(+) site; that span reads GMVG…MEDK. The substrate site is built by arginine 105, asparagine 137, and arginine 168. Residue asparagine 137 participates in NAD(+) binding. Catalysis depends on histidine 192, which acts as the Proton acceptor. Threonine 247 lines the substrate pocket.

This sequence belongs to the LDH/MDH superfamily. LDH family. In terms of assembly, homotetramer.

Its subcellular location is the cytoplasm. It catalyses the reaction (S)-lactate + NAD(+) = pyruvate + NADH + H(+). It functions in the pathway fermentation; pyruvate fermentation to lactate; (S)-lactate from pyruvate: step 1/1. In terms of biological role, interconverts simultaneously and stereospecifically pyruvate and lactate with concomitant interconversion of NADH and NAD(+). This Paranotothenia magellanica (Maori cod) protein is L-lactate dehydrogenase A chain (ldha).